The primary structure comprises 419 residues: G protein-activated inward rectifier potassium channel 4 (419 aa).

Topologically, residues 1–86 (MAGDSRNAMN…LFTTLVDLKW (86 aa)) are cytoplasmic. The residue at position 5 (S5) is a Phosphoserine. The chain crosses the membrane as a helical span at residues 87-111 (RFNLLVFTMVYTITWLFFGFIWWLI). The Extracellular segment spans residues 112–135 (AYVRGDLDHVGDQEWIPCVENLSG). The helical; Pore-forming intramembrane region spans 136 to 147 (FVSAFLFSIETE). The segment at residues 148-154 (TTIGYGF) is an intramembrane region (pore-forming). The Selectivity filter motif lies at 149 to 154 (TIGYGF). The Extracellular portion of the chain corresponds to 155 to 163 (RVITEKCPE). The helical transmembrane segment at 164-185 (GIILLLVQAILGSIVNAFMVGC) threads the bilayer. Residues 186–419 (MFVKISQPKK…SVSRATRGSM (234 aa)) lie on the Cytoplasmic side of the membrane. The segment covering 380-390 (LPSPPLLGGCA) has biased composition (low complexity). The tract at residues 380–419 (LPSPPLLGGCAEAEKEAEAEHDEEEEPNGLSVSRATRGSM) is disordered. The span at 409–419 (LSVSRATRGSM) shows a compositional bias: polar residues.

The protein belongs to the inward rectifier-type potassium channel (TC 1.A.2.1) family. KCNJ5 subfamily. As to quaternary structure, associates with KCNJ3/GIRK1 or KCNJ6/GRIK2 to form a G-protein-activated heteromultimer pore-forming unit. The resulting inward current is much larger. As to expression, most abundant in heart tissue where it is found predominantly in atria. Also found in brain, kidney, liver, spleen, lung and thymus.

The protein localises to the membrane. It carries out the reaction K(+)(in) = K(+)(out). With respect to regulation, heteromultimer composed of KCNJ3/GIRK1 and KCNJ5/GIRK4 is activated by phosphatidylinositol 4,5 biphosphate (PtdIns(4,5)P2). Inward rectifier potassium channels are characterized by a greater tendency to allow potassium to flow into the cell rather than out of it. Their voltage dependence is regulated by the concentration of extracellular potassium; as external potassium is raised, the voltage range of the channel opening shifts to more positive voltages. The inward rectification is mainly due to the blockage of outward current by internal magnesium. Can be blocked by external barium. This potassium channel is controlled by G proteins. The polypeptide is G protein-activated inward rectifier potassium channel 4 (Kcnj5) (Rattus norvegicus (Rat)).